Reading from the N-terminus, the 309-residue chain is Olfactory receptor 7A17 (309 aa).

At 1–25 (MEPENDTGISEFVLLGLSEEPELQP) the chain is on the extracellular side. The N-linked (GlcNAc...) asparagine glycan is linked to Asn5. Residues 26 to 46 (FLFGLFLSMYLVTVLGNLLII) form a helical membrane-spanning segment. At 47-54 (LATISDSH) the chain is on the cytoplasmic side. Residues 55 to 75 (LHTPMYFFLSNLSFADICFIS) traverse the membrane as a helical segment. Residues 76 to 99 (TTIPKMLINIQTQSRVITYAGCIT) are Extracellular-facing. Cys97 and Cys189 are oxidised to a cystine. The chain crosses the membrane as a helical span at residues 100 to 120 (QMCFFVLFGGLDSLLLAVMAY). At 121–139 (DRFVAICHPLHYTVIMNPR) the chain is on the cytoplasmic side. The helical transmembrane segment at 140-160 (LCGLLVLASWMIAALNSLSQS) threads the bilayer. The Extracellular segment spans residues 161-197 (LMVLWLSFCTDLEIPHFFCELNQVIHLACSDTFLNDM). A helical membrane pass occupies residues 198–217 (GMYFAAGLLAGGPLVGILCS). The Cytoplasmic segment spans residues 218-237 (YSKIVSSIRAISSAQGKYKA). A helical transmembrane segment spans residues 238–258 (FSTCASHLSVVSLFCCTGLGV). Topologically, residues 259 to 271 (YLTSAATHNSHTS) are extracellular. The helical transmembrane segment at 272-292 (ATASVMYTVATPMLNPFIYSL) threads the bilayer. The Cytoplasmic segment spans residues 293-309 (RNKDIKRALKMSFRGKQ).

The protein belongs to the G-protein coupled receptor 1 family.

The protein localises to the cell membrane. In terms of biological role, odorant receptor. The chain is Olfactory receptor 7A17 (OR7A17) from Homo sapiens (Human).